The sequence spans 554 residues: Dihydroxy-acid dehydratase (554 aa).

C51 is a [2Fe-2S] cluster binding site. D83 is a binding site for Mg(2+). Residue C124 coordinates [2Fe-2S] cluster. Residues D125 and K126 each coordinate Mg(2+). K126 carries the post-translational modification N6-carboxylysine. C193 lines the [2Fe-2S] cluster pocket. Residue E444 coordinates Mg(2+). S470 acts as the Proton acceptor in catalysis.

Belongs to the IlvD/Edd family. In terms of assembly, homodimer. The cofactor is [2Fe-2S] cluster. Requires Mg(2+) as cofactor.

The enzyme catalyses (2R)-2,3-dihydroxy-3-methylbutanoate = 3-methyl-2-oxobutanoate + H2O. The catalysed reaction is (2R,3R)-2,3-dihydroxy-3-methylpentanoate = (S)-3-methyl-2-oxopentanoate + H2O. It functions in the pathway amino-acid biosynthesis; L-isoleucine biosynthesis; L-isoleucine from 2-oxobutanoate: step 3/4. It participates in amino-acid biosynthesis; L-valine biosynthesis; L-valine from pyruvate: step 3/4. In terms of biological role, functions in the biosynthesis of branched-chain amino acids. Catalyzes the dehydration of (2R,3R)-2,3-dihydroxy-3-methylpentanoate (2,3-dihydroxy-3-methylvalerate) into 2-oxo-3-methylpentanoate (2-oxo-3-methylvalerate) and of (2R)-2,3-dihydroxy-3-methylbutanoate (2,3-dihydroxyisovalerate) into 2-oxo-3-methylbutanoate (2-oxoisovalerate), the penultimate precursor to L-isoleucine and L-valine, respectively. This is Dihydroxy-acid dehydratase from Vesicomyosocius okutanii subsp. Calyptogena okutanii (strain HA).